Here is a 602-residue protein sequence, read N- to C-terminus: MDEVDDILINNQVVDDEEDDEEMLSGLENDSKQDLEGNDDGGEDEEDDDDDDEDDDDDEDEREDDDEQEDDDGEDDAARMDKTATPTNEHQHDEQKAAAAGAGGAGDSGDAVTKIGSEDVKLSDVDGGVGSREASSSTHEASANGEVYEYYKHMLNAAQIADSYNIYPTAAIPIQTHVNALAVSRGLKYLFLGGSDGYIRKYDLLNTLEGKLSLTILQKHSLAESIQNAGILQSYWENEIPQKKSEMKLSANKTDYEPKVSPVHSLEVQSECLFILSGLQNGGITMQGVRYMEGSIAHYFKGRNGHTQIVNILRLNGQEDRFLSGSWDKRLLEWDLQTGDIVNEFKKSRSELSSLEMRPLYSSVDVSGNVNSGKENENADDDMDSLFGDEDEDEKQDAGNEPVETGDGSNGEENKEQISEESLNIVYDESVFMTSGLNGSVHIWDRRMTQSPALSLERGAGVPPWCLSACWGVDGDHVYAGRRNACVEQFDLKMPSKPIHNLKLPSISGPVSCVKAMPNNKHLLCASRDNIRLYNVEIAVDASNSTTKSSKVPFLIVPGHHGGIISNLYLDPTSRFIISTSGNRGWQGNSTDTTLIYDIDLE.

The segment at 1–141 (MDEVDDILIN…REASSSTHEA (141 aa)) is disordered. Acidic residues-rich tracts occupy residues 14–23 (VDDEEDDEEM) and 36–75 (EGND…DGED). Threonine 85 is subject to Phosphothreonine. Phosphoserine occurs at positions 108, 123, and 131. WD repeat units follow at residues 173 to 212 (PIQT…EGKL) and 305 to 346 (GHTQ…NEFK). Residues 366-418 (VSGNVNSGKENENADDDMDSLFGDEDEDEKQDAGNEPVETGDGSNGEENKEQI) are disordered. Residues 378–395 (NADDDMDSLFGDEDEDEK) are compositionally biased toward acidic residues. 3 WD repeats span residues 415–454 (KEQI…SPAL), 506–544 (SISG…DASN), and 560–600 (HHGG…YDID). Position 451 is a phosphoserine (serine 451).

The protein belongs to the WD repeat SPT8 family. In terms of assembly, component of the 1.8 MDa SAGA (Spt-Ada-Gcn5 acetyltransferase) complex, which is composed of 19 subunits TRA1, SPT7, TAF5, NGG1/ADA3, SGF73, SPT20/ADA5, SPT8, TAF12, TAF6, HFI1/ADA1, UBP8, GCN5, ADA2, SPT3, SGF29, TAF10, TAF9, SGF11 and SUS1. The SAGA complex is composed of 4 modules, namely the HAT (histone acetyltransferase) module (GCN5, ADA2, NGG1/ADA3 and SGF29), the DUB (deubiquitinating) module (UBP8, SGF11, SGF73 and SUS1), the core or TAF (TBP-associated factor) module (TAF5, TAF6, TAF9, TAF10 and TAF12), and the Tra1 or SPT (Suppressor of Ty) module (TRA1, HFI1/ADA1, SPT3, SPT7, SPT8 and SPT20/ADA5). The Tra1/SPT module binds activators, the core module recruits TBP (TATA-binding protein), the HAT module contains the histone H3 acetyltransferase GCN5, and the DUB module comprises the histone H2B deubiquitinase UBP8.

It is found in the nucleus. Functionally, component of the transcription coactivator SAGA complex. SAGA acts as a general cofactor required for essentially all RNA polymerase II transcription. At the promoters, SAGA is required for transcription pre-initiation complex (PIC) recruitment. It influences RNA polymerase II transcriptional activity through different activities such as TBP interaction (via core/TAF module) and promoter selectivity, interaction with transcription activators (via Tra1/SPT module), and chromatin modification through histone acetylation (via HAT module) and deubiquitination (via DUB module). SAGA preferentially acetylates histones H3 (to form H3K9ac, H3K14ac, H3K18ac and H3K23ac) and H2B and deubiquitinates histone H2B. SAGA interacts with DNA via upstream activating sequences (UASs). During SAGA-mediated transcriptional inhibition, SPT3 and SPT8 prevent binding of TBP to the TATA box. The sequence is that of SAGA complex subunit SPT8 (SPT8) from Saccharomyces cerevisiae (strain ATCC 204508 / S288c) (Baker's yeast).